Reading from the N-terminus, the 493-residue chain is Glycylpeptide N-tetradecanoyltransferase (493 aa).

45–48 (HKFW) contributes to the tetradecanoyl-CoA binding site. The segment at 53–73 (VPQITGSGAPAPIEEGPIDDP) is disordered. Tetradecanoyl-CoA is bound by residues 182 to 184 (LCV) and 190 to 194 (SKRLA). Leu493 acts as the Proton acceptor; via carboxylate in catalysis.

This sequence belongs to the NMT family. In terms of assembly, monomer.

Its subcellular location is the cytoplasm. The catalysed reaction is N-terminal glycyl-[protein] + tetradecanoyl-CoA = N-tetradecanoylglycyl-[protein] + CoA + H(+). Adds a myristoyl group to the N-terminal glycine residue of certain cellular proteins. This is Glycylpeptide N-tetradecanoyltransferase from Cryptococcus neoformans var. neoformans serotype D (strain B-3501A) (Filobasidiella neoformans).